The chain runs to 189 residues: Elongation factor P 2 (189 aa).

It belongs to the elongation factor P family.

The protein localises to the cytoplasm. Its pathway is protein biosynthesis; polypeptide chain elongation. Functionally, involved in peptide bond synthesis. Stimulates efficient translation and peptide-bond synthesis on native or reconstituted 70S ribosomes in vitro. Probably functions indirectly by altering the affinity of the ribosome for aminoacyl-tRNA, thus increasing their reactivity as acceptors for peptidyl transferase. The chain is Elongation factor P 2 from Lactobacillus acidophilus (strain ATCC 700396 / NCK56 / N2 / NCFM).